Consider the following 427-residue polypeptide: Large ribosomal subunit protein uL4 (427 aa).

A2 bears the N-acetylalanine mark. Position 14 is an N6-acetyllysine (K14). Omega-N-methylarginine is present on R97. K106 is modified (N6-acetyllysine). Residue K239 forms a Glycyl lysine isopeptide (Lys-Gly) (interchain with G-Cter in SUMO2) linkage. At K259 the chain carries N6-acetyllysine. Position 266 is a phosphothreonine (T266). S290 and S295 each carry phosphoserine. At R300 the chain carries Citrulline. K327 participates in a covalent cross-link: Glycyl lysine isopeptide (Lys-Gly) (interchain with G-Cter in SUMO2). An N6-acetyllysine mark is found at K333 and K353. Residue K364 is modified to N6-acetyllysine; alternate. Residue K364 forms a Glycyl lysine isopeptide (Lys-Gly) (interchain with G-Cter in SUMO1); alternate linkage. S365 is modified (phosphoserine). Residues 369–427 (AAVAGKKPVVGKKGKKVAVGVKKQKKPLVGKKAAATKKPAPEKKSTEKKPTTEEKKPAA) form a disordered region. Basic residues predominate over residues 377–397 (VVGKKGKKVAVGVKKQKKPLV). The segment covering 407 to 427 (PAPEKKSTEKKPTTEEKKPAA) has biased composition (basic and acidic residues).

This sequence belongs to the universal ribosomal protein uL4 family. As to quaternary structure, component of the large ribosomal subunit. May bind IPO9 with low affinity. Interacts with RBM3. In terms of processing, citrullinated by PADI4.

Its subcellular location is the cytoplasm. Functionally, component of the large ribosomal subunit. The ribosome is a large ribonucleoprotein complex responsible for the synthesis of proteins in the cell. This is Large ribosomal subunit protein uL4 (RPL4) from Macaca fascicularis (Crab-eating macaque).